A 424-amino-acid polypeptide reads, in one-letter code: CinA-like protein (424 aa).

This sequence belongs to the CinA family.

The chain is CinA-like protein from Shewanella frigidimarina (strain NCIMB 400).